Consider the following 468-residue polypeptide: Glutamate--tRNA ligase (468 aa).

5 to 7 is a binding site for L-glutamate; the sequence is RIA. The 'HIGH' region signature appears at 8–18; it reads PSPTGDPHVGT. Position 15 (histidine 15) interacts with ATP. L-glutamate is bound by residues glutamate 41, 187–191, and arginine 205; that span reads YHLAN. ATP contacts are provided by residues glutamate 208, leucine 236, 243 to 247, and lysine 246; that span reads KISKR. Residues 243–247 carry the 'KMSKS' region motif; it reads KISKR. The interaction with tRNA stretch occupies residues 432–447; it reads QPLRAALTGSLETPGL.

The protein belongs to the class-I aminoacyl-tRNA synthetase family. Glutamate--tRNA ligase type 1 subfamily. As to quaternary structure, monomer.

The protein resides in the cytoplasm. It catalyses the reaction tRNA(Glu) + L-glutamate + ATP = L-glutamyl-tRNA(Glu) + AMP + diphosphate. In the absence of bound tRNA, ATP is bound in a non-productive mode, and the enzyme cannot activate amino acids. Its function is as follows. Catalyzes the attachment of glutamate to tRNA(Glu) in a two-step reaction: glutamate is first activated by ATP to form Glu-AMP and then transferred to the acceptor end of tRNA(Glu). This chain is Glutamate--tRNA ligase, found in Thermus thermophilus (strain ATCC 27634 / DSM 579 / HB8).